The primary structure comprises 161 residues: Trivalent organoarsenical cleaving enzyme (161 aa).

Residues 2–119 form the VOC domain; that stretch reads KYAHVGLNVT…DGNEWEFFYT (118 aa). Residues histidine 5 and histidine 62 each coordinate Fe(2+). Cysteine 96 and cysteine 97 together coordinate roxarsone (III). Residue glutamate 115 participates in Fe(2+) binding.

Requires Fe(2+) as cofactor.

The enzyme catalyses methylarsonous acid + AH2 + O2 = arsenite + methanol + A + H(+). It catalyses the reaction roxarsone (III) + AH2 + O2 = 4-hydroxy-3-nitrocyclohexa-2,5-dien-1-one + arsenite + A + H(+). The catalysed reaction is nitarsone (III) + AH2 + O2 = 4-nitrocyclohexa-2,5-dien-1-one + arsenite + A + H(+). It carries out the reaction 4-aminophenylarsonous acid + AH2 + O2 = 4-aminocyclohexa-2,5-dien-1-one + arsenite + A. With respect to regulation, inhibited in vitro by reagents that chemically modify histidine residues (diethylpyrocarbonate (DEPC)), aspartate or glutamate residues (1-ethyl-3-(3-(dimethylamino)propyl) carbodiimide (EDC)), or cysteine residues (N-ethylmaleimide (NEM) or iodoacetamide (IAA)). Functionally, nonheme iron-dependent dioxygenase that can break carbon-arsenic bonds, playing a role in the detoxification of environmental organoarsenical compounds. Catalyzes the oxygen-dependent demethylation of highly toxic methylarsonous acid (MAs(III)) to arsenite, which can then be exported out of the cell. Can also cleave the C-As bond in several trivalent aromatic arsenicals, including roxarsone (III), nitarsone (III) and (4-aminophenyl)arsonous acid. Organoarsenical degradation by this enzyme is proposed to have a significant impact on the arsenic biogeocycle that maintains a balance between organic and inorganic species. The chain is Trivalent organoarsenical cleaving enzyme from Bacillus sp. (strain MD1).